Here is a 120-residue protein sequence, read N- to C-terminus: MHAFSKIRLTFNQDDPQSHEDDSAGIAVQDAKPTLQAPPMYKVVLFNDDYTPMDFVVEVLEVFFNLNRELATKVMLAVHTEGRAVCGLFTRDIAETKAMQVNQYARESQHPLLCEIEKDG.

This sequence belongs to the ClpS family. As to quaternary structure, binds to the N-terminal domain of the chaperone ClpA.

In terms of biological role, involved in the modulation of the specificity of the ClpAP-mediated ATP-dependent protein degradation. The chain is ATP-dependent Clp protease adapter protein ClpS from Pseudomonas syringae pv. syringae (strain B728a).